Reading from the N-terminus, the 289-residue chain is tRNA pseudouridine synthase B (289 aa).

The active-site Nucleophile is D38.

The protein belongs to the pseudouridine synthase TruB family. Type 1 subfamily.

It catalyses the reaction uridine(55) in tRNA = pseudouridine(55) in tRNA. Functionally, responsible for synthesis of pseudouridine from uracil-55 in the psi GC loop of transfer RNAs. The polypeptide is tRNA pseudouridine synthase B (Clostridium acetobutylicum (strain ATCC 824 / DSM 792 / JCM 1419 / IAM 19013 / LMG 5710 / NBRC 13948 / NRRL B-527 / VKM B-1787 / 2291 / W)).